A 164-amino-acid chain; its full sequence is UPF0304 protein ECA3037 (164 aa).

This sequence belongs to the UPF0304 family.

The protein is UPF0304 protein ECA3037 of Pectobacterium atrosepticum (strain SCRI 1043 / ATCC BAA-672) (Erwinia carotovora subsp. atroseptica).